A 480-amino-acid polypeptide reads, in one-letter code: Glycogen synthase (480 aa).

Lys15 serves as a coordination point for ADP-alpha-D-glucose.

Belongs to the glycosyltransferase 1 family. Bacterial/plant glycogen synthase subfamily.

The catalysed reaction is [(1-&gt;4)-alpha-D-glucosyl](n) + ADP-alpha-D-glucose = [(1-&gt;4)-alpha-D-glucosyl](n+1) + ADP + H(+). It participates in glycan biosynthesis; glycogen biosynthesis. Its function is as follows. Synthesizes alpha-1,4-glucan chains using ADP-glucose. This is Glycogen synthase from Rhizobium rhizogenes (strain K84 / ATCC BAA-868) (Agrobacterium radiobacter).